Reading from the N-terminus, the 71-residue chain is Long neurotoxin Tx-NM3-1 (71 aa).

Cystine bridges form between Cys3–Cys20, Cys14–Cys41, Cys26–Cys30, Cys45–Cys56, and Cys57–Cys62.

In terms of tissue distribution, expressed by the venom gland.

It is found in the secreted. Its function is as follows. Binds with high affinity to muscular (alpha-1-beta-1-gamma-delta/CHRNA1-CHRNB1-CHRNG-CHRND) and neuronal (alpha-7/CHRNA7) nicotinic acetylcholine receptor (nAChR) and inhibits acetylcholine from binding to the receptor, thereby impairing neuromuscular and neuronal transmission. Ranges of nAChR inhibition are in nanomolar (competitive binding with alpha-bungarotoxin gives Ki=1.66 nM on muscle nAChR and Ki=4.84 nM on alpha-7). Also shows moderate inhibition on GABA(A) alpha-1-beta-3-gamma-2 receptor (GABRA1-GABRB3-GABRG2) (IC(50)=0.68 uM), and a lower inhibition on alpha-1-beta-2-gamma-2 (GABRA1-GABRB2-GABRG2) and alpha-3-beta-2-gamma-2 (GABRA3-GABRB2-GABRG2). The protein is Long neurotoxin Tx-NM3-1 of Naja melanoleuca (Forest cobra).